Here is a 129-residue protein sequence, read N- to C-terminus: MRHRKSGRQLNRNSSHRQAMFRNMAGSLVRHEIIKTTLPKAKELRRVVEPLITLAKTDSVANRRLAFARTRDNEIVAKLFNELGPRFASRAGGYTRILKCGFRAGDNAPMAYIELVDRAESQAEVATAE.

This sequence belongs to the bacterial ribosomal protein bL17 family. In terms of assembly, part of the 50S ribosomal subunit. Contacts protein L32.

The sequence is that of Large ribosomal subunit protein bL17 from Serratia proteamaculans (strain 568).